The sequence spans 82 residues: U24 protein (82 aa).

Positions 7-10 (PPSY) match the PPXY motif motif. The helical transmembrane segment at 52 to 72 (FIILACLIISVILCLILILHI) threads the bilayer.

As to quaternary structure, interacts with host ITCH; this interaction probably mediates ITCH degradation. Interacts probably with NEDD4.

It localises to the membrane. In terms of biological role, down-regulates of the TCR/CD3E complex and the transferrin receptor TFRC in host T-cells by blocking them from recycling back to the cell surface. The polypeptide is U24 protein (Homo sapiens (Human)).